A 152-amino-acid polypeptide reads, in one-letter code: Actin-related protein 2/3 complex subunit 5-B (152 aa).

The tract at residues 21–44 (NKFVDDQLQEEPAEPQGPDEAEVD) is disordered. Residues 27–43 (QLQEEPAEPQGPDEAEV) show a composition bias toward acidic residues.

Belongs to the ARPC5 family. In terms of assembly, component of the Arp2/3 complex composed of actr2/arp2, actr3/arp3, arpc1 (arpc1a or arpc1b), arpc2, arpc3, arpc4 and arpc5.

The protein resides in the cytoplasm. Its subcellular location is the cytoskeleton. The protein localises to the cell projection. It is found in the nucleus. Component of the Arp2/3 complex, a multiprotein complex that mediates actin polymerization upon stimulation by nucleation-promoting factor (NPF). The Arp2/3 complex mediates the formation of branched actin networks in the cytoplasm, providing the force for cell motility. In addition to its role in the cytoplasmic cytoskeleton, the Arp2/3 complex also promotes actin polymerization in the nucleus, thereby regulating gene transcription and repair of damaged DNA. The Arp2/3 complex promotes homologous recombination (HR) repair in response to DNA damage by promoting nuclear actin polymerization, leading to drive motility of double-strand breaks (DSBs). The protein is Actin-related protein 2/3 complex subunit 5-B (arpc5-b) of Xenopus laevis (African clawed frog).